The chain runs to 402 residues: 4-hydroxy-3-methylbut-2-enyl diphosphate reductase (402 aa).

Residue C66 participates in [4Fe-4S] cluster binding. H96 contributes to the (2E)-4-hydroxy-3-methylbut-2-enyl diphosphate binding site. Residue H96 coordinates dimethylallyl diphosphate. Position 96 (H96) interacts with isopentenyl diphosphate. C157 serves as a coordination point for [4Fe-4S] cluster. H185 provides a ligand contact to (2E)-4-hydroxy-3-methylbut-2-enyl diphosphate. Residue H185 participates in dimethylallyl diphosphate binding. Residue H185 coordinates isopentenyl diphosphate. Residue E187 is the Proton donor of the active site. Residue T250 participates in (2E)-4-hydroxy-3-methylbut-2-enyl diphosphate binding. A [4Fe-4S] cluster-binding site is contributed by C288. (2E)-4-hydroxy-3-methylbut-2-enyl diphosphate contacts are provided by S317, S318, N319, and S379. Residues S317, S318, N319, and S379 each contribute to the dimethylallyl diphosphate site. S317, S318, N319, and S379 together coordinate isopentenyl diphosphate.

The protein belongs to the IspH family. The cofactor is [4Fe-4S] cluster.

The enzyme catalyses isopentenyl diphosphate + 2 oxidized [2Fe-2S]-[ferredoxin] + H2O = (2E)-4-hydroxy-3-methylbut-2-enyl diphosphate + 2 reduced [2Fe-2S]-[ferredoxin] + 2 H(+). It catalyses the reaction dimethylallyl diphosphate + 2 oxidized [2Fe-2S]-[ferredoxin] + H2O = (2E)-4-hydroxy-3-methylbut-2-enyl diphosphate + 2 reduced [2Fe-2S]-[ferredoxin] + 2 H(+). The protein operates within isoprenoid biosynthesis; dimethylallyl diphosphate biosynthesis; dimethylallyl diphosphate from (2E)-4-hydroxy-3-methylbutenyl diphosphate: step 1/1. It functions in the pathway isoprenoid biosynthesis; isopentenyl diphosphate biosynthesis via DXP pathway; isopentenyl diphosphate from 1-deoxy-D-xylulose 5-phosphate: step 6/6. In terms of biological role, catalyzes the conversion of 1-hydroxy-2-methyl-2-(E)-butenyl 4-diphosphate (HMBPP) into a mixture of isopentenyl diphosphate (IPP) and dimethylallyl diphosphate (DMAPP). Acts in the terminal step of the DOXP/MEP pathway for isoprenoid precursor biosynthesis. This is 4-hydroxy-3-methylbut-2-enyl diphosphate reductase from Gloeothece citriformis (strain PCC 7424) (Cyanothece sp. (strain PCC 7424)).